The sequence spans 597 residues: Cysteine/serine-rich nuclear protein 3 (597 aa).

Disordered regions lie at residues 22–64 (EDVD…TPSS) and 348–407 (CQGD…GFVE). The segment covering 42–52 (SSESADSGDSV) has biased composition (low complexity). Residues 53-64 (NPSTSNHFTPSS) show a composition bias toward polar residues. A compositionally biased stretch (acidic residues) spans 348–359 (CQGDEEEEEEDG). Over residues 361-376 (SFCSGATDSSTQSLAP) the composition is skewed to polar residues. Residues 378 to 401 (ESDEEEEEEEEEEEEEEEDDDDDK) are compositionally biased toward acidic residues.

Belongs to the AXUD1 family. As to expression, detected only in the brain of 15 dpc, 18 dpc, newborn and P6 mice (at protein level).

It is found in the nucleus. In terms of biological role, binds to the consensus sequence 5'-AGAGTG-3' and has transcriptional activator activity. Plays a role in apoptosis. In Mus musculus (Mouse), this protein is Cysteine/serine-rich nuclear protein 3 (Csrnp3).